We begin with the raw amino-acid sequence, 149 residues long: Calmodulin (149 aa).

Position 2 is an N-acetylalanine (Ala-2). EF-hand domains are found at residues 8–43 (EQIA…LGQN), 44–79 (PTEA…KMKD), 81–116 (DSEE…LGEK), and 117–149 (LTDE…MTAK). Ca(2+)-binding residues include Asp-21, Asp-23, Asp-25, Thr-27, Glu-32, Asp-57, Asp-59, Asn-61, Thr-63, Glu-68, Asp-94, Asp-96, Asn-98, Tyr-100, and Glu-105. The residue at position 116 (Lys-116) is an N6,N6,N6-trimethyllysine. Residues Asp-130, Asp-132, Asp-134, Gln-136, and Glu-141 each coordinate Ca(2+).

The protein belongs to the calmodulin family.

In terms of biological role, calmodulin acts as part of a calcium signal transduction pathway by mediating the control of a large number of enzymes, ion channels, aquaporins and other proteins through calcium-binding. Calcium-binding is required for the activation of calmodulin. Among the enzymes to be stimulated by the calmodulin-calcium complex are a number of protein kinases, such as myosin light-chain kinases and calmodulin-dependent protein kinase type II (CaMK2), and phosphatases. This chain is Calmodulin (calm), found in Electrophorus electricus (Electric eel).